We begin with the raw amino-acid sequence, 644 residues long: Biosynthetic arginine decarboxylase (644 aa).

An N6-(pyridoxal phosphate)lysine modification is found at Lys-105. 287–297 is a substrate binding site; sequence LDVGGGLGIDY.

This sequence belongs to the Orn/Lys/Arg decarboxylase class-II family. SpeA subfamily. Mg(2+) is required as a cofactor. It depends on pyridoxal 5'-phosphate as a cofactor.

The enzyme catalyses L-arginine + H(+) = agmatine + CO2. Functionally, catalyzes the biosynthesis of agmatine from arginine. This chain is Biosynthetic arginine decarboxylase, found in Parasynechococcus marenigrum (strain WH8102).